Consider the following 796-residue polypeptide: Protein translocase subunit SecA 2 (796 aa).

Residues Gln84, Gly102 to Thr106, and Asp496 each bind ATP.

It belongs to the SecA family. As to quaternary structure, monomer and homodimer. Part of the essential Sec protein translocation apparatus which comprises SecA, SecYEG and auxiliary proteins SecDF. Other proteins may also be involved.

It is found in the cell membrane. Its subcellular location is the cytoplasm. It catalyses the reaction ATP + H2O + cellular proteinSide 1 = ADP + phosphate + cellular proteinSide 2.. Part of the Sec protein translocase complex. Interacts with the SecYEG preprotein conducting channel. Has a central role in coupling the hydrolysis of ATP to the transfer of proteins into and across the cell membrane, serving as an ATP-driven molecular motor driving the stepwise translocation of polypeptide chains across the membrane. The protein is Protein translocase subunit SecA 2 of Staphylococcus aureus (strain MSSA476).